Consider the following 281-residue polypeptide: Ribosomal RNA small subunit methyltransferase A (281 aa).

Asparagine 36, leucine 38, glycine 63, glutamate 84, aspartate 109, and asparagine 127 together coordinate S-adenosyl-L-methionine.

The protein belongs to the class I-like SAM-binding methyltransferase superfamily. rRNA adenine N(6)-methyltransferase family. RsmA subfamily.

Its subcellular location is the cytoplasm. The catalysed reaction is adenosine(1518)/adenosine(1519) in 16S rRNA + 4 S-adenosyl-L-methionine = N(6)-dimethyladenosine(1518)/N(6)-dimethyladenosine(1519) in 16S rRNA + 4 S-adenosyl-L-homocysteine + 4 H(+). Its function is as follows. Specifically dimethylates two adjacent adenosines (A1518 and A1519) in the loop of a conserved hairpin near the 3'-end of 16S rRNA in the 30S particle. May play a critical role in biogenesis of 30S subunits. This is Ribosomal RNA small subunit methyltransferase A from Borreliella afzelii (strain PKo) (Borrelia afzelii).